The sequence spans 329 residues: Glutamine synthetase (329 aa).

The GS beta-grasp domain occupies 4–86 (YKLEYIWLDA…VMCEVMMPDA (83 aa)). One can recognise a GS catalytic domain in the interval 89 to 329 (PHASNTRATV…GDPYQMLLSS (241 aa)). Mg(2+)-binding residues include E109 and E111. E167 serves as a coordination point for ATP. The Mg(2+) site is built by E172 and E179. E278 provides a ligand contact to L-glutamate.

Belongs to the glutamine synthetase family. Homooctamer and homotetramer. Requires Mg(2+) as cofactor.

It localises to the cytoplasm. It catalyses the reaction L-glutamate + NH4(+) + ATP = L-glutamine + ADP + phosphate + H(+). In terms of biological role, catalyzes the ATP-dependent biosynthesis of glutamine from glutamate and ammonia. The polypeptide is Glutamine synthetase (Rhizobium meliloti (Ensifer meliloti)).